A 227-amino-acid chain; its full sequence is MTQQKPPAGADLSQTFIRFALDAGVLSFGEFVTKAGRKSPYFFNAGLFNQGAMLGEVAQFYAKTLLASGVQFDVLFGPAYKGITLASATAVALAGMGRDVGFAYNRKEAKDHGEGGTLVGAKLQGKVVIVDDVISAGTSVRESVNMIRAAGAEPAAVLIALDRMEKSGTAEQVGTHSAVQDVQREYGIPVIAIASLKDLLAYLDASQDPALSASREAVAAYRQRYGV.

5-phospho-alpha-D-ribose 1-diphosphate is bound at residue lysine 34. Position 42–43 (42–43 (FF)) interacts with orotate. 5-phospho-alpha-D-ribose 1-diphosphate contacts are provided by residues 80-81 (YK), arginine 106, lysine 107, lysine 110, histidine 112, and 131-139 (DDVISAGTS). Positions 135 and 163 each coordinate orotate.

Belongs to the purine/pyrimidine phosphoribosyltransferase family. PyrE subfamily. As to quaternary structure, homodimer. Requires Mg(2+) as cofactor.

The catalysed reaction is orotidine 5'-phosphate + diphosphate = orotate + 5-phospho-alpha-D-ribose 1-diphosphate. Its pathway is pyrimidine metabolism; UMP biosynthesis via de novo pathway; UMP from orotate: step 1/2. Functionally, catalyzes the transfer of a ribosyl phosphate group from 5-phosphoribose 1-diphosphate to orotate, leading to the formation of orotidine monophosphate (OMP). This chain is Orotate phosphoribosyltransferase, found in Cupriavidus necator (strain ATCC 17699 / DSM 428 / KCTC 22496 / NCIMB 10442 / H16 / Stanier 337) (Ralstonia eutropha).